A 227-amino-acid chain; its full sequence is Glutathione S-transferase U7 (227 aa).

In terms of domain architecture, GST N-terminal spans 8–87 (EEVKLLGMWA…YIDETWRDNP (80 aa)). Glutathione contacts are provided by residues 18–19 (SP), 44–45 (NK), 58–59 (MI), and 71–72 (ES). The region spanning 92-215 (DPYERTMARF…PPEDEHLKYI (124 aa)) is the GST C-terminal domain.

The protein belongs to the GST superfamily. Tau family.

Its subcellular location is the cytoplasm. The protein localises to the cytosol. It carries out the reaction RX + glutathione = an S-substituted glutathione + a halide anion + H(+). Its function is as follows. May be involved in the conjugation of reduced glutathione to a wide number of exogenous and endogenous hydrophobic electrophiles and have a detoxification role against certain herbicides. The polypeptide is Glutathione S-transferase U7 (GSTU7) (Arabidopsis thaliana (Mouse-ear cress)).